We begin with the raw amino-acid sequence, 61 residues long: MDIEPEVPVVEKQMLAGNRGKQKTRRSVAKDAIRKPASDSTNGGNWVNVADKIEVHIHFNF.

The tract at residues 15-45 (LAGNRGKQKTRRSVAKDAIRKPASDSTNGGN) is disordered. The segment at 17 to 35 (GNRGKQKTRRSVAKDAIRK) is RNA-binding. The span at 28–37 (VAKDAIRKPA) shows a compositional bias: basic and acidic residues.

This sequence belongs to the carmovirus double gene block protein 1 family. Homodimer.

In terms of biological role, cell-to-cell movement. Displays RNA-binding activity. The sequence is that of Double gene block protein 1 from Carnation mottle virus (isolate China/Shanghai) (CarMV).